The sequence spans 287 residues: NAD kinase (287 aa).

Asp70 acts as the Proton acceptor in catalysis. NAD(+)-binding positions include 70-71, 144-145, Arg155, Lys172, Asp174, 185-190, and Gln244; these read DG, ND, and TAYSLS.

The protein belongs to the NAD kinase family. A divalent metal cation is required as a cofactor.

The protein resides in the cytoplasm. The enzyme catalyses NAD(+) + ATP = ADP + NADP(+) + H(+). In terms of biological role, involved in the regulation of the intracellular balance of NAD and NADP, and is a key enzyme in the biosynthesis of NADP. Catalyzes specifically the phosphorylation on 2'-hydroxyl of the adenosine moiety of NAD to yield NADP. The chain is NAD kinase from Solibacter usitatus (strain Ellin6076).